Reading from the N-terminus, the 185-residue chain is MQIKSFVLAASAAATASAAACQAPTNKYFGIVAIHSGSAVQYQPFSAAKSSIFAGLNSQNASCDRPDEKSATFYIQDGSLYLYAASATPQEIFVDRSGMGQGKIGYTTGAQPAPRNSERQGWAIDSQNHLQFQGKDLIACPNSIDGAWSIWADAGVANPAGNTDCVGIAARVEDVTNPNSCVYTQ.

The N-terminal stretch at methionine 1 to alanine 18 is a signal peptide. Asparagine 60 carries N-linked (GlcNAc...) asparagine glycosylation.

The protein belongs to the phiA family.

It is found in the secreted. The protein resides in the cell wall. Its function is as follows. Cell wall protein involved in development of asexual structures such as phialide and conidium development, and thus required for spore formation. Plays a role as a general stress protectant produced by the fungus in competition with antagonistic bacteria. In Aspergillus fumigatus (strain CBS 144.89 / FGSC A1163 / CEA10) (Neosartorya fumigata), this protein is Cell wall protein phiA.